A 470-amino-acid chain; its full sequence is 3-isopropylmalate dehydratase large subunit (470 aa).

Positions 349, 409, and 412 each coordinate [4Fe-4S] cluster.

This sequence belongs to the aconitase/IPM isomerase family. LeuC type 1 subfamily. In terms of assembly, heterodimer of LeuC and LeuD. Requires [4Fe-4S] cluster as cofactor.

The enzyme catalyses (2R,3S)-3-isopropylmalate = (2S)-2-isopropylmalate. The protein operates within amino-acid biosynthesis; L-leucine biosynthesis; L-leucine from 3-methyl-2-oxobutanoate: step 2/4. Catalyzes the isomerization between 2-isopropylmalate and 3-isopropylmalate, via the formation of 2-isopropylmaleate. The sequence is that of 3-isopropylmalate dehydratase large subunit from Campylobacter jejuni subsp. jejuni serotype O:2 (strain ATCC 700819 / NCTC 11168).